The primary structure comprises 256 residues: MLRIADKTFNSHLFTGTGKFASSQLMVEAIRASGSQLVTLAMKRVDLRQHNDAILMPLIEAGVTLLPNTSGAKTAEEAIFAAQLAREALGTHWLKLEIHPDARWLLPDPIETLKAAEALVKQGFVVLPYCGADPVLCKRLEEVGCAAVMPLGAPIGSNQGLETKAMLEIIIQQSTVPVVVDAGIGVPSHATQALEMGADAVLVNTAIAVADDPVMMATAFRLAVEAGVLARQAVPGNRSPYASATSPLTGFLEALA.

Residue lysine 95 is the Schiff-base intermediate with DXP of the active site. 1-deoxy-D-xylulose 5-phosphate is bound by residues glycine 156, 182–183 (AG), and 204–205 (NT).

This sequence belongs to the ThiG family. As to quaternary structure, homotetramer. Forms heterodimers with either ThiH or ThiS.

It is found in the cytoplasm. It carries out the reaction [ThiS sulfur-carrier protein]-C-terminal-Gly-aminoethanethioate + 2-iminoacetate + 1-deoxy-D-xylulose 5-phosphate = [ThiS sulfur-carrier protein]-C-terminal Gly-Gly + 2-[(2R,5Z)-2-carboxy-4-methylthiazol-5(2H)-ylidene]ethyl phosphate + 2 H2O + H(+). Its pathway is cofactor biosynthesis; thiamine diphosphate biosynthesis. Functionally, catalyzes the rearrangement of 1-deoxy-D-xylulose 5-phosphate (DXP) to produce the thiazole phosphate moiety of thiamine. Sulfur is provided by the thiocarboxylate moiety of the carrier protein ThiS. In vitro, sulfur can be provided by H(2)S. The chain is Thiazole synthase from Salmonella schwarzengrund (strain CVM19633).